A 246-amino-acid chain; its full sequence is Ribulose-phosphate 3-epimerase (246 aa).

Residue Ser9 participates in substrate binding. Residues His34, Asp36, and His83 each contribute to the a divalent metal cation site. Asp36 serves as the catalytic Proton acceptor. Residues His83, 159-162 (GFGG), 188-190 (DGG), and 210-212 (GTS) contribute to the substrate site. Asp188 provides a ligand contact to a divalent metal cation. Asp188 (proton donor) is an active-site residue.

It belongs to the ribulose-phosphate 3-epimerase family. Co(2+) is required as a cofactor. It depends on Fe(2+) as a cofactor. Requires Mn(2+) as cofactor. Zn(2+) serves as cofactor.

The catalysed reaction is D-ribulose 5-phosphate = D-xylulose 5-phosphate. It functions in the pathway carbohydrate degradation; pentose phosphate pathway; D-xylulose 5-phosphate from D-ribulose 5-phosphate (non-oxidative stage): step 1/1. Its function is as follows. Catalyzes the reversible epimerization of D-ribulose 5-phosphate to D-xylulose 5-phosphate. The chain is Ribulose-phosphate 3-epimerase (RPE1) from Candida glabrata (strain ATCC 2001 / BCRC 20586 / JCM 3761 / NBRC 0622 / NRRL Y-65 / CBS 138) (Yeast).